A 111-amino-acid chain; its full sequence is Pyrimidine/purine nucleoside phosphorylase 1 (111 aa).

Belongs to the nucleoside phosphorylase PpnP family.

It carries out the reaction a purine D-ribonucleoside + phosphate = a purine nucleobase + alpha-D-ribose 1-phosphate. The enzyme catalyses adenosine + phosphate = alpha-D-ribose 1-phosphate + adenine. The catalysed reaction is cytidine + phosphate = cytosine + alpha-D-ribose 1-phosphate. It catalyses the reaction guanosine + phosphate = alpha-D-ribose 1-phosphate + guanine. It carries out the reaction inosine + phosphate = alpha-D-ribose 1-phosphate + hypoxanthine. The enzyme catalyses thymidine + phosphate = 2-deoxy-alpha-D-ribose 1-phosphate + thymine. The catalysed reaction is uridine + phosphate = alpha-D-ribose 1-phosphate + uracil. It catalyses the reaction xanthosine + phosphate = alpha-D-ribose 1-phosphate + xanthine. Catalyzes the phosphorolysis of diverse nucleosides, yielding D-ribose 1-phosphate and the respective free bases. Can use uridine, adenosine, guanosine, cytidine, thymidine, inosine and xanthosine as substrates. Also catalyzes the reverse reactions. This is Pyrimidine/purine nucleoside phosphorylase 1 from Psychrobacter cryohalolentis (strain ATCC BAA-1226 / DSM 17306 / VKM B-2378 / K5).